Consider the following 433-residue polypeptide: MYGALVTAADSIRTGLGASLLAGFRPRTGAPSTATILRSALWPAAVLSVLHRSIVLTTNGNITDDFKPVYRAVLNFRRGWDIYNEHFDYVDPHYLYPPGGTLLMAPFGYLPFAPSRYLFISINTAAILVAAYLLLRMFNFTLTSVAAPALILAMFATETVTNTLVFTNINGCILLLEVLFLRWLLDGRASRQWCGGLAIGLTLVLKPLLGPLLLLPLLNRQWRALVAAVVVPVVVNVAALPLVSDPMSFFTRTLPYILGTRDYFNSSILGNGVYFGLPTWLILFLRILFTAITFGALWLLYRYYRTGDPLFWFTTSSGVLLLWSWLVMSLAQGYYSMMLFPFLMTVVLPNSVIRNWPAWLGVYGFMTLDRWLLFNWMRWGRALEYLKITYGWSLLLIVTFTVLYFRYLDAKADNRLDGGIDPAWLTPEREGQR.

Helical transmembrane passes span 118–138 (LFIS…LRMF), 140–160 (FTLT…TETV), 164–184 (LVFT…LRWL), 197–217 (LAIG…LLPL), 224–244 (ALVA…PLVS), 280–300 (WLIL…LWLL), 310–330 (LFWF…VMSL), 333–353 (GYYS…NSVI), 356–376 (WPAW…LFNW), and 385–405 (YLKI…VLYF).

It belongs to the glycosyltransferase 87 family.

It localises to the cell membrane. The enzyme catalyses Adds an alpha-D-arabinofuranosyl group from trans,octacis-decaprenylphospho-beta-D-arabinofuranose at the 3-O-position of an alpha-(1-&gt;5)-arabinofuranan chain attached to a beta-(1-&gt;5)-galactofuranan chain.. Its pathway is cell wall biogenesis; cell wall polysaccharide biosynthesis. Involved in the biosynthesis of the arabinogalactan (AG) region of the mycolylarabinogalactan-peptidoglycan (mAGP) complex, an essential component of the mycobacterial cell wall. Catalyzes the addition of an arabinofuranosyl (Araf) residue from the sugar donor beta-D-arabinofuranosyl-1-monophosphoryldecaprenol (DPA) on the C-3 of an alpha-(1-&gt;5)-linked Araf from the arabinan backbone of AG. The chain is Alpha-(1-&gt;3)-arabinofuranosyltransferase (aftC) from Mycobacterium tuberculosis (strain CDC 1551 / Oshkosh).